Consider the following 146-residue polypeptide: Large ribosomal subunit protein uL15 (146 aa).

A disordered region spans residues 1 to 65; that stretch reads MSDIQLNTLK…GQMPLQRRLP (65 aa). Gly residues predominate over residues 24–34; sequence RGIGSGLGKTA.

This sequence belongs to the universal ribosomal protein uL15 family. As to quaternary structure, part of the 50S ribosomal subunit.

Functionally, binds to the 23S rRNA. The sequence is that of Large ribosomal subunit protein uL15 from Bordetella parapertussis (strain 12822 / ATCC BAA-587 / NCTC 13253).